A 182-amino-acid polypeptide reads, in one-letter code: Inner membrane-spanning protein YciB (182 aa).

Transmembrane regions (helical) follow at residues 20–42, 55–75, 76–96, 123–143, and 153–173; these read GGIY…WVYY, LIMI…TFIL, LKPT…AQFF, LNLA…YIAF, and FKLF…GFWM.

Belongs to the YciB family.

It is found in the cell inner membrane. Plays a role in cell envelope biogenesis, maintenance of cell envelope integrity and membrane homeostasis. The sequence is that of Inner membrane-spanning protein YciB from Polynucleobacter asymbioticus (strain DSM 18221 / CIP 109841 / QLW-P1DMWA-1) (Polynucleobacter necessarius subsp. asymbioticus).